The following is a 907-amino-acid chain: Gamma-tubulin complex component 3 (907 aa).

Position 2 is an N-acetylalanine (Ala-2). Ser-113 carries the post-translational modification Phosphoserine. A compositionally biased stretch (polar residues) spans Asn-210–Met-230. The interval Asn-210–Gly-241 is disordered.

It belongs to the TUBGCP family. As to quaternary structure, component of the gamma-tubulin ring complex (gTuRC) consisting of TUBGCP2, TUBGCP3, TUBGCP4, TUBGCP5 and TUBGCP6 and gamma-tubulin TUBG1 or TUBG2. TUBGCP2, TUBGCP3, TUBGCP4, TUBGCP5 and TUBGCP6 assemble in a 5:5:2:1:1 stoichiometry; each is associated with a gamma-tubulin, thereby arranging 14 gamma-tubulins in a helical manner. Gamma-tubulin at the first position is blocked by TUBGCP3 at the last position, allowing 13 protafilaments to grow into a microtubule. The gTuRC (via TUBGCP3 and TUBGCP6) interacts with ACTB and MZT1; the interactions form a luminal bridge that stabilizes the initial structure during complex assembly. The gTuRC (via TUBGCP2) interacts with MZT2A/MZT2B and CDK5RAP2 (via CM1 motif); the interactions play a role in gTuRC activation. Interacts with NIN (via N-terminus); the interaction may promote recruitment of the gamma-tubulin ring complex to the centrosome. In terms of tissue distribution, ubiquitously expressed.

The protein localises to the cytoplasm. It localises to the cytoskeleton. It is found in the microtubule organizing center. Its subcellular location is the centrosome. Component of the gamma-tubulin ring complex (gTuRC) which mediates microtubule nucleation. The gTuRC regulates the minus-end nucleation of alpha-beta tubulin heterodimers that grow into microtubule protafilaments, a critical step in centrosome duplication and spindle formation. In Homo sapiens (Human), this protein is Gamma-tubulin complex component 3 (TUBGCP3).